The sequence spans 412 residues: MNKIKVVELFAGVGGFRLGLENTKNGIFDITWANQWEPSRKIQHAFDCYSKRFKNGIHSNKDIAQVSDEEMANTEADMIVGGFPCQDYSVARSLNGELGIQGKKGVLFWQIIRYIQNTFPKYLLLENVDRLLKSPSSQRGRDFAVMLSTLNELGYNVEWRVINAADYGNAQRRRRVFIFGYKQDLNYSKAMEESPLDKIIYHNGLFAEAFPIEDYANKNRVNRTHITHDIVDISDNFSFQFYNSGIMKNGEILTIDTIPKYEKSVTLGEIIESNVDDGFSLNQDQIDKFKYLRGPKKIKRTTKDGHEYYFSEGGMSETDSLELPARTMLTSESSINRSTHFLNVDGVYRTLTPIEAERLNGFPDNWTEGMPIKMRYFCMGNALVVPLITRIGNQIEKIDSITNDEFSQLRLF.

The SAM-dependent MTase C5-type domain maps to 4–402; sequence IKVVELFAGV…NQIEKIDSIT (399 aa). The active site involves Cys-85.

This sequence belongs to the class I-like SAM-binding methyltransferase superfamily. C5-methyltransferase family.

It catalyses the reaction a 2'-deoxycytidine in DNA + S-adenosyl-L-methionine = a 5-methyl-2'-deoxycytidine in DNA + S-adenosyl-L-homocysteine + H(+). Its function is as follows. A methylase that recognizes the double-stranded sequence 5'-GATC-3', methylates C-4 on both strands and protects the DNA from cleavage by the Sau3AI endonuclease. This chain is Type II methyltransferase M.Sau3AI (sau3AIM), found in Staphylococcus aureus.